We begin with the raw amino-acid sequence, 494 residues long: Cytochrome P450 monooxygenase acrF (494 aa).

Residue C420 participates in heme binding.

Belongs to the cytochrome P450 family. Requires heme as cofactor.

It functions in the pathway secondary metabolite biosynthesis. Cytochrome P450 monooxygenase; part of the cluster that mediates the biosynthesis of acurin A, a highly reduced polyketide coupled to a serine via a peptide bond. The activities of the highly reducing polyketide synthase acrA and the nonribosomal peptide synthetase acrB are collectively responsible for the synthesis of the acurin A core structure with a heptaketide backbone produced by acrA covalently fused to a L-serine by acrB. After the formation of the PK-NRP hybrid product, it is detached from acrB by reductive release to set up the formation of the lactam ring by aldol condensation. The hydrolyase acrC then catalyzes water loss to generate a double bond in the ring. This double bond is probably reduced, which is followed by three oxidations at C-22 to generate the carboxylic acid moiety, involving probably the FAD-binding monooxygenase acrE and the cytochrome P450 monooxygenases acrD and acrF. Finally, a last methylation step performed by the O-methyltransferase acrG leads to the production of acurin A. The polypeptide is Cytochrome P450 monooxygenase acrF (Aspergillus aculeatus (strain ATCC 16872 / CBS 172.66 / WB 5094)).